We begin with the raw amino-acid sequence, 974 residues long: Localization factor PodJL (974 aa).

3 coiled-coil regions span residues Asp81–Gly163, Val218–Ala320, and Gln375–Ala469. Disordered stretches follow at residues Ser460–Glu497 and Ala589–Lys611. A compositionally biased stretch (low complexity) spans Ala589–Glu598. A helical membrane pass occupies residues Ala642–Leu662. Sel1-like repeat units lie at residues Pro757 to Asp793, Pro794 to Leu829, and Val830 to Asp865.

Post-translationally, two isoforms exist, the full-length translation product PodJL and a C-terminal truncated form PodJS. Both appear during a specific time period of the cell cycle to control different aspects of polar organelle development.

Its subcellular location is the membrane. Functionally, podJL provides the positional information for the localization of several polar organelles (pili, adhesive holdfast and chemotactic apparatus) by recruiting structural (CpaE) and regulatory (PleC) proteins to a specific cell pole. The chain is Localization factor PodJL (podJ) from Caulobacter vibrioides (strain ATCC 19089 / CIP 103742 / CB 15) (Caulobacter crescentus).